The chain runs to 464 residues: Alpha-2A adrenergic receptor (464 aa).

Residues 1–47 (MFRQEQRWPRQLWPMGSLQPDSGNASWNGTEGPGGGTRATPYSLQVT) lie on the Extracellular side of the membrane. Positions 13–34 (WPMGSLQPDSGNASWNGTEGPG) are disordered. Residues 19 to 29 (QPDSGNASWNG) are compositionally biased toward polar residues. Residues asparagine 24 and asparagine 28 are each glycosylated (N-linked (GlcNAc...) asparagine). A helical transmembrane segment spans residues 48–73 (VTLVCLVGLLILLTVFGNVLVIIAVF). Topologically, residues 74–84 (TSRALKAPQNL) are cytoplasmic. Residues 85–110 (FLVSLASADILVATLVIPFSLANEVM) form a helical membrane-spanning segment. Residues 111-120 (GYWYFGKAWC) are Extracellular-facing. Cysteine 120 and cysteine 201 are oxidised to a cystine. The chain crosses the membrane as a helical span at residues 121 to 143 (EIYLALDVLFCTSSIVHLCAISL). The Cytoplasmic portion of the chain corresponds to 144 to 163 (DRYWSITQAIEYNLKRTPRR). A helical transmembrane segment spans residues 164–187 (IKAIIVTVWVISAVISFPPLISFE). Topologically, residues 188-206 (KAGGGGQQPAEPRCEINDQ) are extracellular. Residues 207–231 (KWYVISSSIGSFFAPCLIMILVYVR) traverse the membrane as a helical segment. The Cytoplasmic segment spans residues 232 to 388 (IYQIAKRRTR…RQNREKRFTF (157 aa)). The segment at 240–378 (TRVPPSRRGP…GGAKASRWRG (139 aa)) is disordered. Low complexity predominate over residues 251-268 (AHAAAPPGGAERRPNGLG). A compositionally biased stretch (basic and acidic residues) spans 312 to 329 (SSEHAERPPGARRPERGL). At serine 345 the chain carries Phosphoserine. The span at 354–363 (AGSGTSGSGP) shows a compositional bias: gly residues. Arginine 367 carries the omega-N-methylarginine modification. The helical transmembrane segment at 389–413 (VLAVVIGVFVVCWFPFFFTYTLTAV) threads the bilayer. Topologically, residues 414–423 (GCSVPRTLFK) are extracellular. Residues 424-444 (FFFWFGYCNSSLNPVIYTIFN) form a helical membrane-spanning segment. Topologically, residues 445 to 464 (HDFRRAFKKILCRGDRKRIV) are cytoplasmic. Cysteine 456 carries the S-palmitoyl cysteine lipid modification.

The protein belongs to the G-protein coupled receptor 1 family. Adrenergic receptor subfamily. ADRA2A sub-subfamily. As to quaternary structure, component of the ADA2A-containing complex (ATAC), composed of KAT14, KAT2A, TADA2L, TADA3L, ZZ3, MBIP, WDR5, YEATS2, CCDC101 and DR1.

The protein resides in the cell membrane. Its function is as follows. Alpha-2 adrenergic receptors mediate the catecholamine-induced inhibition of adenylate cyclase through the action of G proteins. Component of the ATAC complex, a complex with histone acetyltransferase activity on histones H3 and H4. In Cavia porcellus (Guinea pig), this protein is Alpha-2A adrenergic receptor.